A 46-amino-acid polypeptide reads, in one-letter code: Esculentin-1 (46 aa).

Cysteine 40 and cysteine 46 are disulfide-bonded.

Expressed by the skin glands.

Its subcellular location is the secreted. In terms of biological role, antimicrobial peptide. Stimulates insulin release by BRIN-BD11 cells in vitro. This is Esculentin-1 from Pelophylax saharicus (Sahara frog).